We begin with the raw amino-acid sequence, 323 residues long: ComG operon protein 2 (323 aa).

3 helical membrane passes run 93–113, 143–163, and 296–316; these read YPLFLIFTVAVMFYMLQSIII, LVIILLVLFTAGIGIYYWLVF, and MIYGFVAAMILLVYLSMLVPM.

Belongs to the GSP F family.

The protein resides in the cell membrane. Functionally, required for transformation and DNA binding. The sequence is that of ComG operon protein 2 (comGB) from Bacillus subtilis (strain 168).